The sequence spans 101 residues: Small ribosomal subunit protein uS14 (101 aa).

The protein belongs to the universal ribosomal protein uS14 family. In terms of assembly, part of the 30S ribosomal subunit. Contacts proteins S3 and S10.

Binds 16S rRNA, required for the assembly of 30S particles and may also be responsible for determining the conformation of the 16S rRNA at the A site. This chain is Small ribosomal subunit protein uS14, found in Ruthia magnifica subsp. Calyptogena magnifica.